A 404-amino-acid polypeptide reads, in one-letter code: G-protein coupled receptor 143 (404 aa).

The Extracellular portion of the chain corresponds to Met1 to Ala28. A helical transmembrane segment spans residues Phe29–Leu49. At Pro50–Asp78 the chain is on the cytoplasmic side. The chain crosses the membrane as a helical span at residues Leu79–Val99. The Extracellular portion of the chain corresponds to Asp100–Gln124. Asn106 carries an N-linked (GlcNAc...) asparagine glycan. Residues Leu125–Ile145 traverse the membrane as a helical segment. Over Arg146–Ala149 the chain is Cytoplasmic. Residues Gly150–Val170 form a helical membrane-spanning segment. Topologically, residues Glu171–Ala191 are extracellular. The chain crosses the membrane as a helical span at residues Ile192–Leu212. Topologically, residues Phe213–Lys248 are cytoplasmic. Residues Ala221–Met238 are necessary for its G protein-activation ability and normal distribution of melanosomes. A lysosomal/melanosomal membrane localization signal motif is present at residues Ser222–Tyr231. A helical membrane pass occupies residues Ile249 to Tyr269. The Extracellular segment spans residues Leu270 to Trp292. A helical membrane pass occupies residues Phe293 to Trp313. At Thr314–Leu404 the chain is on the cytoplasmic side. Residues Trp329–Glu330 carry the lysosomal/melanosomal membrane localization signal motif. Residues Glu338–Leu404 are disordered. Residues Lys355 to Glu366 show a composition bias toward polar residues.

Belongs to the G-protein coupled receptor OA family. In terms of assembly, interacts with heterotrimeric G(i) proteins. Interacts with ARRB1 and ARRB2. Interacts with MLANA. Glycosylated. In terms of processing, phosphorylated. As to expression, expressed at high levels in the retina, including the retinal pigment epithelium (RPE), and in melanocytes. Weak expression is observed in brain and adrenal gland.

It is found in the melanosome membrane. The protein localises to the lysosome membrane. It localises to the apical cell membrane. Its function is as follows. Receptor for tyrosine, L-DOPA and dopamine. After binding to L-DOPA, stimulates Ca(2+) influx into the cytoplasm, increases secretion of the neurotrophic factor SERPINF1 and relocalizes beta arrestin at the plasma membrane; this ligand-dependent signaling occurs through a G(q)-mediated pathway in melanocytic cells. Its activity is mediated by G proteins which activate the phosphoinositide signaling pathway. Also plays a role as an intracellular G protein-coupled receptor involved in melanosome biogenesis, organization and transport. The chain is G-protein coupled receptor 143 (GPR143) from Homo sapiens (Human).